The chain runs to 388 residues: Succinate--CoA ligase [ADP-forming] subunit beta (388 aa).

The ATP-grasp domain maps to 9–245; sequence KELLASYGLP…KSQENERELK (237 aa). ATP-binding positions include K46, 53–55, E100, Y103, and E108; that span reads GRG. Mg(2+)-binding residues include N200 and D214. Substrate is bound by residues N265 and 322 to 324; that span reads GIV.

The protein belongs to the succinate/malate CoA ligase beta subunit family. In terms of assembly, heterotetramer of two alpha and two beta subunits. The cofactor is Mg(2+).

The enzyme catalyses succinate + ATP + CoA = succinyl-CoA + ADP + phosphate. The catalysed reaction is GTP + succinate + CoA = succinyl-CoA + GDP + phosphate. The protein operates within carbohydrate metabolism; tricarboxylic acid cycle; succinate from succinyl-CoA (ligase route): step 1/1. Functionally, succinyl-CoA synthetase functions in the citric acid cycle (TCA), coupling the hydrolysis of succinyl-CoA to the synthesis of either ATP or GTP and thus represents the only step of substrate-level phosphorylation in the TCA. The beta subunit provides nucleotide specificity of the enzyme and binds the substrate succinate, while the binding sites for coenzyme A and phosphate are found in the alpha subunit. The sequence is that of Succinate--CoA ligase [ADP-forming] subunit beta from Neisseria meningitidis serogroup B (strain ATCC BAA-335 / MC58).